The following is a 557-amino-acid chain: Urocanate hydratase (557 aa).

Residues 1 to 20 (MSNPRHNEREVRSPRGDELN) form a disordered region. NAD(+) is bound by residues 52–53 (GG), glutamine 130, 176–178 (GMG), glutamate 196, arginine 201, 242–243 (NA), 263–267 (QTSAH), 273–274 (YL), and tyrosine 322. Cysteine 410 is a catalytic residue. Glycine 492 serves as a coordination point for NAD(+).

Belongs to the urocanase family. NAD(+) serves as cofactor.

The protein resides in the cytoplasm. It carries out the reaction 4-imidazolone-5-propanoate = trans-urocanate + H2O. The protein operates within amino-acid degradation; L-histidine degradation into L-glutamate; N-formimidoyl-L-glutamate from L-histidine: step 2/3. Catalyzes the conversion of urocanate to 4-imidazolone-5-propionate. In Brucella ovis (strain ATCC 25840 / 63/290 / NCTC 10512), this protein is Urocanate hydratase.